The sequence spans 539 residues: Phosphoenolpyruvate carboxykinase (ATP) (539 aa).

The substrate site is built by Arg-64, Tyr-206, and Lys-212. Residues Lys-212, His-231, and 247–255 (GLSGTGKTT) each bind ATP. The Mn(2+) site is built by Lys-212 and His-231. Position 268 (Asp-268) interacts with Mn(2+). Residues Glu-296, Arg-332, 448–449 (RI), and Thr-454 contribute to the ATP site. Position 332 (Arg-332) interacts with substrate.

The protein belongs to the phosphoenolpyruvate carboxykinase (ATP) family. In terms of assembly, monomer. Mn(2+) is required as a cofactor.

It localises to the cytoplasm. It catalyses the reaction oxaloacetate + ATP = phosphoenolpyruvate + ADP + CO2. Its pathway is carbohydrate biosynthesis; gluconeogenesis. Involved in the gluconeogenesis. Catalyzes the conversion of oxaloacetate (OAA) to phosphoenolpyruvate (PEP) through direct phosphoryl transfer between the nucleoside triphosphate and OAA. The sequence is that of Phosphoenolpyruvate carboxykinase (ATP) from Edwardsiella ictaluri (strain 93-146).